The following is a 90-amino-acid chain: Small ribosomal subunit protein bS18 (90 aa).

The protein belongs to the bacterial ribosomal protein bS18 family. Part of the 30S ribosomal subunit. Forms a tight heterodimer with protein bS6.

Binds as a heterodimer with protein bS6 to the central domain of the 16S rRNA, where it helps stabilize the platform of the 30S subunit. This Bordetella avium (strain 197N) protein is Small ribosomal subunit protein bS18.